The primary structure comprises 219 residues: Response regulator ArlR (219 aa).

In terms of domain architecture, Response regulatory spans 3–116 (NILIVEDEQN…ELLARIRAVL (114 aa)). 4-aspartylphosphate is present on Asp-52. Residues 122 to 219 (KDVLDINGII…TVRGVGYVIR (98 aa)) constitute a DNA-binding region (ompR/PhoB-type).

In terms of processing, phosphorylated by ArlS.

The protein localises to the cytoplasm. In terms of biological role, member of the two-component regulatory system ArlS/ArlR. This Staphylococcus epidermidis (strain ATCC 12228 / FDA PCI 1200) protein is Response regulator ArlR (arlR).